Here is a 330-residue protein sequence, read N- to C-terminus: tRNA U34 carboxymethyltransferase (330 aa).

Residues K91, W105, K110, G130, 152-154 (DPS), 181-182 (IE), M196, Y200, and R315 contribute to the carboxy-S-adenosyl-L-methionine site.

It belongs to the class I-like SAM-binding methyltransferase superfamily. CmoB family. In terms of assembly, homotetramer.

The enzyme catalyses carboxy-S-adenosyl-L-methionine + 5-hydroxyuridine(34) in tRNA = 5-carboxymethoxyuridine(34) in tRNA + S-adenosyl-L-homocysteine + H(+). In terms of biological role, catalyzes carboxymethyl transfer from carboxy-S-adenosyl-L-methionine (Cx-SAM) to 5-hydroxyuridine (ho5U) to form 5-carboxymethoxyuridine (cmo5U) at position 34 in tRNAs. The sequence is that of tRNA U34 carboxymethyltransferase from Shewanella woodyi (strain ATCC 51908 / MS32).